The following is a 210-amino-acid chain: Probable GTP-binding protein EngB (210 aa).

The region spanning 25 to 199 (CGIEVAFAGR…RQKLDSWFSE (175 aa)) is the EngB-type G domain. Residues 33–40 (GRSNAGKS), 60–64 (GRTQL), 78–81 (DLPG), 145–148 (TKAD), and 178–180 (FSS) each bind GTP. Mg(2+) contacts are provided by Ser-40 and Thr-62.

Belongs to the TRAFAC class TrmE-Era-EngA-EngB-Septin-like GTPase superfamily. EngB GTPase family. Mg(2+) is required as a cofactor.

Functionally, necessary for normal cell division and for the maintenance of normal septation. The chain is Probable GTP-binding protein EngB from Salmonella paratyphi C (strain RKS4594).